The following is a 467-amino-acid chain: MARLFGTDGVRGVANADLTAELALALASAAVEEVADRGTPPPGPVDGVPVARSAHGIDHRPLVVVGRDTRPSGEFLEAAVVAGLARAGADVTRIGVVPTPAVSYVVAATGADLGVMLSASHNPMPDNGIKLFAAGGLKLPDDVEDAIERRMAGPAARRPVAAAVGRVRDDSMLVDGYVDHLLATLPGGPGGLRGLRVVVDCAQGAASDLAPRVLRAAGADVIALHADGDGLRINDRSGATHLDSLRDAVVAHGADAGIAHDGDADRCLAVDSAGEIVDGDQILALCALALAERGELERGTVVVTVMSNLGFHHAMRDAGIDVVTTPVGDRYVLEAMRSGAYSLGGEQSGHVVFLRHAGTGDGLLTALQILGRMAETSQPLHELAKAMTRLPQVLVNVRGVDRARAETSDELRAAVADAEAELAGAGRVLLRPSGTEPLVRVMVEAPTDELARDVAGRLADVVQRALR.

Residue S120 is the Phosphoserine intermediate of the active site. 4 residues coordinate Mg(2+): S120, D261, D263, and D265. Position 120 is a phosphoserine (S120).

It belongs to the phosphohexose mutase family. Requires Mg(2+) as cofactor. In terms of processing, activated by phosphorylation.

It catalyses the reaction alpha-D-glucosamine 1-phosphate = D-glucosamine 6-phosphate. In terms of biological role, catalyzes the conversion of glucosamine-6-phosphate to glucosamine-1-phosphate. The protein is Phosphoglucosamine mutase of Parafrankia sp. (strain EAN1pec).